The primary structure comprises 67 residues: uncharacterized protein (67 aa).

The stretch at 17 to 47 (AASLQELEKKINTQIENNKAIMLRVKSVSHQ) forms a coiled coil.

This is an uncharacterized protein from Bacillus subtilis (strain 168).